The primary structure comprises 683 residues: Leishmanolysin-like peptidase (683 aa).

Histidine 257 provides a ligand contact to Zn(2+). Residue glutamate 258 is part of the active site. Residues histidine 261 and histidine 364 each contribute to the Zn(2+) site.

It belongs to the peptidase M8 family. Requires Zn(2+) as cofactor.

It is found in the cytoplasm. Its function is as follows. Essential for the coordination of mitotic progression, and also plays a role in cell migration. The protein is Leishmanolysin-like peptidase (Invadolysin) of Drosophila melanogaster (Fruit fly).